Here is a 93-residue protein sequence, read N- to C-terminus: Small ribosomal subunit protein uS15 (93 aa).

It belongs to the universal ribosomal protein uS15 family. As to quaternary structure, part of the 30S ribosomal subunit. Forms a bridge to the 50S subunit in the 70S ribosome, contacting the 23S rRNA.

Its function is as follows. One of the primary rRNA binding proteins, it binds directly to 16S rRNA where it helps nucleate assembly of the platform of the 30S subunit by binding and bridging several RNA helices of the 16S rRNA. In terms of biological role, forms an intersubunit bridge (bridge B4) with the 23S rRNA of the 50S subunit in the ribosome. This is Small ribosomal subunit protein uS15 from Anaplasma marginale (strain Florida).